The primary structure comprises 156 residues: 6,7-dimethyl-8-ribityllumazine synthase (156 aa).

5-amino-6-(D-ribitylamino)uracil-binding positions include phenylalanine 23, serine 57 to glutamate 59, and alanine 81 to isoleucine 83. Glycine 86–threonine 87 contacts (2S)-2-hydroxy-3-oxobutyl phosphate. Histidine 89 functions as the Proton donor in the catalytic mechanism. A 5-amino-6-(D-ribitylamino)uracil-binding site is contributed by phenylalanine 114. Arginine 128 is a (2S)-2-hydroxy-3-oxobutyl phosphate binding site.

This sequence belongs to the DMRL synthase family. As to quaternary structure, forms an icosahedral capsid composed of 60 subunits, arranged as a dodecamer of pentamers.

The catalysed reaction is (2S)-2-hydroxy-3-oxobutyl phosphate + 5-amino-6-(D-ribitylamino)uracil = 6,7-dimethyl-8-(1-D-ribityl)lumazine + phosphate + 2 H2O + H(+). It functions in the pathway cofactor biosynthesis; riboflavin biosynthesis; riboflavin from 2-hydroxy-3-oxobutyl phosphate and 5-amino-6-(D-ribitylamino)uracil: step 1/2. In terms of biological role, catalyzes the formation of 6,7-dimethyl-8-ribityllumazine by condensation of 5-amino-6-(D-ribitylamino)uracil with 3,4-dihydroxy-2-butanone 4-phosphate. This is the penultimate step in the biosynthesis of riboflavin. The protein is 6,7-dimethyl-8-ribityllumazine synthase of Alkalilimnicola ehrlichii (strain ATCC BAA-1101 / DSM 17681 / MLHE-1).